A 212-amino-acid chain; its full sequence is Translation initiation factor IF-3 (212 aa).

The segment covering 190–203 (LVDKNSDSQDKSVS) has biased composition (basic and acidic residues). A disordered region spans residues 190–212 (LVDKNSDSQDKSVSEEDTNEGEQ).

This sequence belongs to the IF-3 family. Monomer.

The protein localises to the cytoplasm. In terms of biological role, IF-3 binds to the 30S ribosomal subunit and shifts the equilibrium between 70S ribosomes and their 50S and 30S subunits in favor of the free subunits, thus enhancing the availability of 30S subunits on which protein synthesis initiation begins. In Mycoplasmopsis fermentans (Mycoplasma fermentans), this protein is Translation initiation factor IF-3.